Reading from the N-terminus, the 301-residue chain is Acetylglutamate kinase (301 aa).

Residues 68–69, Arg90, and Asn197 each bind substrate; that span reads GG.

This sequence belongs to the acetylglutamate kinase family. ArgB subfamily.

Its subcellular location is the cytoplasm. The catalysed reaction is N-acetyl-L-glutamate + ATP = N-acetyl-L-glutamyl 5-phosphate + ADP. It participates in amino-acid biosynthesis; L-arginine biosynthesis; N(2)-acetyl-L-ornithine from L-glutamate: step 2/4. In terms of biological role, catalyzes the ATP-dependent phosphorylation of N-acetyl-L-glutamate. The protein is Acetylglutamate kinase of Nitrosococcus oceani (strain ATCC 19707 / BCRC 17464 / JCM 30415 / NCIMB 11848 / C-107).